Reading from the N-terminus, the 415-residue chain is Serine hydroxymethyltransferase (415 aa).

(6S)-5,6,7,8-tetrahydrofolate-binding positions include leucine 121 and 125–127 (GHL). Lysine 229 carries the post-translational modification N6-(pyridoxal phosphate)lysine. Residue 352–354 (SPF) participates in (6S)-5,6,7,8-tetrahydrofolate binding.

This sequence belongs to the SHMT family. Homodimer. Pyridoxal 5'-phosphate is required as a cofactor.

It is found in the cytoplasm. It catalyses the reaction (6R)-5,10-methylene-5,6,7,8-tetrahydrofolate + glycine + H2O = (6S)-5,6,7,8-tetrahydrofolate + L-serine. Its pathway is one-carbon metabolism; tetrahydrofolate interconversion. It functions in the pathway amino-acid biosynthesis; glycine biosynthesis; glycine from L-serine: step 1/1. In terms of biological role, catalyzes the reversible interconversion of serine and glycine with tetrahydrofolate (THF) serving as the one-carbon carrier. This reaction serves as the major source of one-carbon groups required for the biosynthesis of purines, thymidylate, methionine, and other important biomolecules. Also exhibits THF-independent aldolase activity toward beta-hydroxyamino acids, producing glycine and aldehydes, via a retro-aldol mechanism. The protein is Serine hydroxymethyltransferase of Methylobacillus flagellatus (strain ATCC 51484 / DSM 6875 / VKM B-1610 / KT).